The sequence spans 347 residues: Heme A synthase (347 aa).

Helical transmembrane passes span Val-14–Ile-34, Tyr-95–Phe-115, Leu-125–Leu-145, Leu-166–Leu-186, Leu-198–Ala-218, Phe-260–Leu-280, Leu-289–Val-309, and Ile-311–Leu-331. His-262 lines the heme pocket. Position 317 (His-317) interacts with heme.

The protein belongs to the COX15/CtaA family. Type 2 subfamily. Interacts with CtaB. Heme b is required as a cofactor.

The protein localises to the cell membrane. The catalysed reaction is Fe(II)-heme o + 2 A + H2O = Fe(II)-heme a + 2 AH2. The protein operates within porphyrin-containing compound metabolism; heme A biosynthesis; heme A from heme O: step 1/1. Its function is as follows. Catalyzes the conversion of heme O to heme A by two successive hydroxylations of the methyl group at C8. The first hydroxylation forms heme I, the second hydroxylation results in an unstable dihydroxymethyl group, which spontaneously dehydrates, resulting in the formyl group of heme A. This chain is Heme A synthase, found in Ehrlichia canis (strain Jake).